Reading from the N-terminus, the 683-residue chain is DNA ligase (683 aa).

NAD(+) is bound by residues 44–48, 93–94, and glutamate 127; these read DAEYD and SL. Residue lysine 129 is the N6-AMP-lysine intermediate of the active site. 4 residues coordinate NAD(+): arginine 150, glutamate 187, lysine 302, and lysine 326. Zn(2+)-binding residues include cysteine 420, cysteine 423, cysteine 438, and cysteine 444. The region spanning 601–683 is the BRCT domain; that stretch reads RVGGRLAGLT…SKLLATGGNQ (83 aa).

This sequence belongs to the NAD-dependent DNA ligase family. LigA subfamily. It depends on Mg(2+) as a cofactor. Requires Mn(2+) as cofactor.

It catalyses the reaction NAD(+) + (deoxyribonucleotide)n-3'-hydroxyl + 5'-phospho-(deoxyribonucleotide)m = (deoxyribonucleotide)n+m + AMP + beta-nicotinamide D-nucleotide.. In terms of biological role, DNA ligase that catalyzes the formation of phosphodiester linkages between 5'-phosphoryl and 3'-hydroxyl groups in double-stranded DNA using NAD as a coenzyme and as the energy source for the reaction. It is essential for DNA replication and repair of damaged DNA. This Trichlorobacter lovleyi (strain ATCC BAA-1151 / DSM 17278 / SZ) (Geobacter lovleyi) protein is DNA ligase.